The primary structure comprises 269 residues: Protein OPG079 (269 aa).

This sequence belongs to the orthopoxvirus OPG079 family. In terms of assembly, homoomultimer (Potential). Interacts with the small subunit of ribonucleotide reductase.

It is found in the host cytoplasm. Its function is as follows. Plays an essential role in viral DNA replication. Binds to ssDNA with high affinity and localizes to cytoplasmic factories where nascent viral genomes accumulate. May disrupt loops, hairpins and other secondary structures present on ssDNA to reduce and eliminate pausing of viral DNA polymerase at specific sites during elongation. The chain is Protein OPG079 (OPG079) from Cynomys gunnisoni (Gunnison's prairie dog).